The chain runs to 230 residues: RNA polymerase sigma factor FliA (230 aa).

A sigma-70 factor domain-2 region spans residues 6 to 78 (LWQRYVPLVR…MLDELRSRDW (73 aa)). An Interaction with polymerase core subunit RpoC motif is present at residues 33 to 36 (DLLQ). The sigma-70 factor domain-3 stretch occupies residues 86-156 (NAREVASAMQ…VEPMLEGHED (71 aa)). A sigma-70 factor domain-4 region spans residues 175–223 (AIEALPEREKMVLTLYYQEELNLKEIGAVLEVGESRVSQLHSQAIKRLR). Residues 197–216 (LKEIGAVLEVGESRVSQLHS) constitute a DNA-binding region (H-T-H motif).

The protein belongs to the sigma-70 factor family. FliA subfamily.

The protein localises to the cytoplasm. In terms of biological role, sigma factors are initiation factors that promote the attachment of RNA polymerase to specific initiation sites and are then released. This sigma factor controls the expression of flagella-related genes. The sequence is that of RNA polymerase sigma factor FliA from Yersinia enterocolitica.